We begin with the raw amino-acid sequence, 449 residues long: Elongation factor 1-alpha C (449 aa).

The 230-residue stretch at 5–234 folds into the tr-type G domain; that stretch reads KQHVSIVVIG…DACDPPKRPV (230 aa). The interval 14-21 is G1; it reads GHVDSGKS. 14-21 lines the GTP pocket; sequence GHVDSGKS. N6,N6-dimethyllysine is present on K55. The tract at residues 70–74 is G2; that stretch reads GITID. K79 is modified (N6,N6,N6-trimethyllysine). The interval 91 to 94 is G3; sequence DAPG. GTP contacts are provided by residues 91–95 and 153–156; these read DAPGH and NKMD. A G4 region spans residues 153–156; the sequence is NKMD. K187 is modified (N6,N6,N6-trimethyllysine). A G5 region spans residues 194 to 196; it reads SGW. K265 carries the post-translational modification N6-methyllysine. N6,N6,N6-trimethyllysine is present on residues K310 and K400.

Belongs to the TRAFAC class translation factor GTPase superfamily. Classic translation factor GTPase family. EF-Tu/EF-1A subfamily.

It localises to the cytoplasm. Its function is as follows. This protein promotes the GTP-dependent binding of aminoacyl-tRNA to the A-site of ribosomes during protein biosynthesis. The chain is Elongation factor 1-alpha C (TEF-C) from Porphyra purpurea (Red seaweed).